Here is a 177-residue protein sequence, read N- to C-terminus: Large ribosomal subunit protein uL6 (177 aa).

It belongs to the universal ribosomal protein uL6 family. Part of the 50S ribosomal subunit.

This protein binds to the 23S rRNA, and is important in its secondary structure. It is located near the subunit interface in the base of the L7/L12 stalk, and near the tRNA binding site of the peptidyltransferase center. The protein is Large ribosomal subunit protein uL6 of Rubrobacter xylanophilus (strain DSM 9941 / JCM 11954 / NBRC 16129 / PRD-1).